The following is a 305-amino-acid chain: MGVLVKNLVEDLKLEVLNKGKDDIELNISDINRPGLQFSGFYNYFANERVQLIGKTEWSFLDVMSPELRKKRVAKFFQFETPCVIITRNLKPHKEVLENSRKYNRWLLNTSNISTRFTSKLMNYLDEKLAPETRLHGVLVDVYGIGILITGESGIGKSETALELIKRGHRLVADDAVDIKEIEGKLIGSSPYVTSGMLEVRGLGIIDVPSLYGLSSVLDIKTIGVIIHLEQWKKDQDYDRLGIDEINRDILNVPVRKITLPIRPGRNIAVIIEAAAANYRYNLNSNSSPVDTIGARMKEENLKNK.

Active-site residues include H136 and K157. An ATP-binding site is contributed by 151 to 158; it reads GESGIGKS. S158 contributes to the Mg(2+) binding site. D175 (proton acceptor; for phosphorylation activity. Proton donor; for dephosphorylation activity) is an active-site residue. The interval 198 to 207 is important for the catalytic mechanism of both phosphorylation and dephosphorylation; it reads LEVRGLGIID. A Mg(2+)-binding site is contributed by E199. R240 is a catalytic residue. The segment at 261–266 is important for the catalytic mechanism of dephosphorylation; it reads PIRPGR.

The protein belongs to the HPrK/P family. As to quaternary structure, homohexamer. The cofactor is Mg(2+).

It carries out the reaction [HPr protein]-L-serine + ATP = [HPr protein]-O-phospho-L-serine + ADP + H(+). The catalysed reaction is [HPr protein]-O-phospho-L-serine + phosphate + H(+) = [HPr protein]-L-serine + diphosphate. Its function is as follows. Catalyzes the ATP- as well as the pyrophosphate-dependent phosphorylation of a specific serine residue in HPr, a phosphocarrier protein of the phosphoenolpyruvate-dependent sugar phosphotransferase system (PTS). HprK/P also catalyzes the pyrophosphate-producing, inorganic phosphate-dependent dephosphorylation (phosphorolysis) of seryl-phosphorylated HPr (P-Ser-HPr). The two antagonistic activities of HprK/P are regulated by several intracellular metabolites, which change their concentration in response to the absence or presence of rapidly metabolisable carbon sources (glucose, fructose, etc.) in the growth medium. Therefore, by controlling the phosphorylation state of HPr, HPrK/P is a sensor enzyme that plays a major role in the regulation of carbon metabolism and sugar transport: it mediates carbon catabolite repression (CCR), and regulates PTS-catalyzed carbohydrate uptake and inducer exclusion. The sequence is that of HPr kinase/phosphorylase from Clostridium tetani (strain Massachusetts / E88).